The following is a 436-amino-acid chain: GTPase Der (436 aa).

2 EngA-type G domains span residues 4 to 167 (PVIA…PKIE) and 176 to 351 (IRFS…ESHS). GTP is bound by residues 10–17 (GRPNVGKS), 57–61 (DTGGI), 119–122 (NKVD), 182–189 (GRPNVGKS), 229–233 (DTAGM), and 294–297 (NKWD). Residues 352-436 (IRIQTNVLND…PIHIIARARD (85 aa)) enclose the KH-like domain.

This sequence belongs to the TRAFAC class TrmE-Era-EngA-EngB-Septin-like GTPase superfamily. EngA (Der) GTPase family. Associates with the 50S ribosomal subunit.

Its function is as follows. GTPase that plays an essential role in the late steps of ribosome biogenesis. This is GTPase Der from Bacillus anthracis (strain A0248).